A 536-amino-acid chain; its full sequence is Chaperonin GroEL (536 aa).

Residues 29 to 32, 86 to 90, Gly-412, and Asp-493 each bind ATP; these read TLGP and DGTTT.

This sequence belongs to the chaperonin (HSP60) family. Forms a cylinder of 14 subunits composed of two heptameric rings stacked back-to-back. Interacts with the co-chaperonin GroES.

The protein localises to the cytoplasm. The enzyme catalyses ATP + H2O + a folded polypeptide = ADP + phosphate + an unfolded polypeptide.. Its function is as follows. Together with its co-chaperonin GroES, plays an essential role in assisting protein folding. The GroEL-GroES system forms a nano-cage that allows encapsulation of the non-native substrate proteins and provides a physical environment optimized to promote and accelerate protein folding. In Aster yellows witches'-broom phytoplasma (strain AYWB), this protein is Chaperonin GroEL.